The sequence spans 273 residues: Zinc finger protein 80 (273 aa).

C2H2-type zinc fingers lie at residues 49–71 (YKCK…HQIH) and 77–99 (YECQ…MRIH). The C2H2-type 3; atypical zinc-finger motif lies at 105-127 (CKCVECGKVFNRRSHLLCYRQIH). 4 consecutive C2H2-type zinc fingers follow at residues 133-155 (YECS…RMTH), 161-183 (FGCK…MKIH), 189-211 (YKCG…SMTH), and 217-239 (YECK…TRSH).

The protein belongs to the krueppel C2H2-type zinc-finger protein family.

The protein resides in the nucleus. Functionally, may be involved in transcriptional regulation. This is Zinc finger protein 80 (ZNF80) from Gorilla gorilla gorilla (Western lowland gorilla).